The sequence spans 299 residues: Recombination-associated protein RdgC (299 aa).

The protein belongs to the RdgC family.

The protein resides in the cytoplasm. It is found in the nucleoid. Its function is as follows. May be involved in recombination. The sequence is that of Recombination-associated protein RdgC from Cupriavidus necator (strain ATCC 17699 / DSM 428 / KCTC 22496 / NCIMB 10442 / H16 / Stanier 337) (Ralstonia eutropha).